The sequence spans 262 residues: Ribosomal RNA small subunit methyltransferase A (262 aa).

Positions 11, 13, 38, 60, 85, and 105 each coordinate S-adenosyl-L-methionine.

It belongs to the class I-like SAM-binding methyltransferase superfamily. rRNA adenine N(6)-methyltransferase family. RsmA subfamily.

The protein localises to the cytoplasm. The catalysed reaction is adenosine(1518)/adenosine(1519) in 16S rRNA + 4 S-adenosyl-L-methionine = N(6)-dimethyladenosine(1518)/N(6)-dimethyladenosine(1519) in 16S rRNA + 4 S-adenosyl-L-homocysteine + 4 H(+). Specifically dimethylates two adjacent adenosines (A1518 and A1519) in the loop of a conserved hairpin near the 3'-end of 16S rRNA in the 30S particle. May play a critical role in biogenesis of 30S subunits. The chain is Ribosomal RNA small subunit methyltransferase A from Neorickettsia sennetsu (strain ATCC VR-367 / Miyayama) (Ehrlichia sennetsu).